The chain runs to 540 residues: Chaperonin GroEL (540 aa).

ATP is bound by residues 29 to 32 (TLGP), 86 to 90 (DGTTT), Gly-413, 478 to 480 (DAL), and Asp-494.

It belongs to the chaperonin (HSP60) family. Forms a cylinder of 14 subunits composed of two heptameric rings stacked back-to-back. Interacts with the co-chaperonin GroES.

It localises to the cytoplasm. The enzyme catalyses ATP + H2O + a folded polypeptide = ADP + phosphate + an unfolded polypeptide.. Functionally, together with its co-chaperonin GroES, plays an essential role in assisting protein folding. The GroEL-GroES system forms a nano-cage that allows encapsulation of the non-native substrate proteins and provides a physical environment optimized to promote and accelerate protein folding. In Clostridioides difficile (Peptoclostridium difficile), this protein is Chaperonin GroEL.